The chain runs to 609 residues: Threonine--tRNA ligase (609 aa).

An editing domain region spans residues 1 to 143 (MRVLYLHTER…SFKPGDSRAE (143 aa)). Catalytic stretches follow at residues 195–491 (PRYL…PRLP) and 196–491 (RYLE…PRLP). The Zn(2+) site is built by Cys-288, His-339, and His-460.

It belongs to the class-II aminoacyl-tRNA synthetase family. Homodimer. Zn(2+) serves as cofactor.

It localises to the cytoplasm. It catalyses the reaction tRNA(Thr) + L-threonine + ATP = L-threonyl-tRNA(Thr) + AMP + diphosphate + H(+). Functionally, catalyzes the attachment of threonine to tRNA(Thr) in a two-step reaction: L-threonine is first activated by ATP to form Thr-AMP and then transferred to the acceptor end of tRNA(Thr). Also edits incorrectly charged L-seryl-tRNA(Thr). In Pyrobaculum neutrophilum (strain DSM 2338 / JCM 9278 / NBRC 100436 / V24Sta) (Thermoproteus neutrophilus), this protein is Threonine--tRNA ligase.